Here is a 338-residue protein sequence, read N- to C-terminus: Phosphate acyltransferase (338 aa).

The protein belongs to the PlsX family. In terms of assembly, homodimer. Probably interacts with PlsY.

The protein localises to the cytoplasm. The enzyme catalyses a fatty acyl-[ACP] + phosphate = an acyl phosphate + holo-[ACP]. It functions in the pathway lipid metabolism; phospholipid metabolism. Catalyzes the reversible formation of acyl-phosphate (acyl-PO(4)) from acyl-[acyl-carrier-protein] (acyl-ACP). This enzyme utilizes acyl-ACP as fatty acyl donor, but not acyl-CoA. This Salinibacter ruber (strain DSM 13855 / M31) protein is Phosphate acyltransferase.